The chain runs to 406 residues: Mitochondrial potassium channel (406 aa).

The N-terminal 35 residues, 1-35 (MTGCSPVFAMQHVVGVPRILVRRTFLGTDVTMTRT), are a transit peptide targeting the mitochondrion. Residues 36–198 (LCSPGPREKR…KERTRAERTK (163 aa)) lie on the Mitochondrial matrix side of the membrane. Residues 113–140 (VREAREGLEAQQTKLKEVRDRLDRVSRE) are a coiled coil. Residues 199–219 (NWSLIGSVLGALIGVAGSTYV) form a helical membrane-spanning segment. Residues 220–382 (NRVRLQELKA…LEAQANRNTV (163 aa)) are Mitochondrial intermembrane-facing. Residues 383–403 (SSTLVTCVTFLATLPLLYMLF) traverse the membrane as a helical segment. Residues 404 to 406 (KTS) lie on the Mitochondrial matrix side of the membrane.

The mitochondrial potassium channel (mitoK(ATP)) is composed of 4 subunits of CCDC51/MITOK and 4 subunits of ABCB8/MITOSUR.

It is found in the mitochondrion inner membrane. It catalyses the reaction K(+)(in) = K(+)(out). With respect to regulation, inhibited by ATP via mitoK(ATP) channel. Functionally, pore-forming subunit of the mitochondrial ATP-gated potassium channel (mitoK(ATP)). Together with ATP-binding subunit ABCB8/MITOSUR of the mitoK(ATP) channel, mediates ATP-dependent K(+) currents across the mitochondrial inner membrane. An increase in ATP intracellular levels closes the channel, inhibiting K(+) transport, whereas a decrease in ATP levels enhances K(+) uptake in the mitochondrial matrix. May contribute to the homeostatic control of cellular metabolism under stress conditions by regulating the mitochondrial matrix volume. The polypeptide is Mitochondrial potassium channel (Mus musculus (Mouse)).